The chain runs to 258 residues: UPF0246 protein CKO_03380 (258 aa).

Belongs to the UPF0246 family.

The chain is UPF0246 protein CKO_03380 from Citrobacter koseri (strain ATCC BAA-895 / CDC 4225-83 / SGSC4696).